A 463-amino-acid polypeptide reads, in one-letter code: Asparagine--tRNA ligase (463 aa).

The protein belongs to the class-II aminoacyl-tRNA synthetase family. As to quaternary structure, homodimer.

The protein resides in the cytoplasm. It catalyses the reaction tRNA(Asn) + L-asparagine + ATP = L-asparaginyl-tRNA(Asn) + AMP + diphosphate + H(+). This chain is Asparagine--tRNA ligase, found in Clostridium botulinum (strain ATCC 19397 / Type A).